The chain runs to 184 residues: Secreted protein B (184 aa).

A signal peptide spans 1-19 (MRFILVLVLILGLVSSSFG). A glycan (N-linked (GlcNAc...) asparagine) is linked at N129. The Cell attachment site motif lies at 164-166 (RGD).

It belongs to the Sct family.

It localises to the secreted. This chain is Secreted protein B (29C), found in Dictyostelium discoideum (Social amoeba).